We begin with the raw amino-acid sequence, 509 residues long: Dihydrolipoyl dehydrogenase, mitochondrial (509 aa).

The N-terminal 35 residues, 1–35 (MQSWSRVYCSLAKRGHFNRISHGLQGLSAVPLRTY), are a transit peptide targeting the mitochondrion. Lysine 66 carries the post-translational modification N6-acetyllysine; alternate. Lysine 66 is modified (N6-succinyllysine; alternate). FAD-binding positions include 71 to 80 (EKNETLGGTC) and lysine 89. The cysteines at positions 80 and 85 are disulfide-linked. 4 positions are modified to N6-acetyllysine; alternate: lysine 104, lysine 122, lysine 132, and lysine 143. Lysine 104, lysine 122, lysine 132, and lysine 143 each carry N6-succinyllysine; alternate. Glycine 154 lines the FAD pocket. N6-succinyllysine is present on residues lysine 159 and lysine 166. Position 183–185 (183–185 (TGS)) interacts with FAD. NAD(+)-binding positions include 220–227 (GAGVIGVE) and glutamate 243. An N6-succinyllysine mark is found at lysine 273 and lysine 277. Valine 278 contacts NAD(+). Serine 285 and serine 297 each carry phosphoserine. Glycine 314 contributes to the NAD(+) binding site. N6-acetyllysine is present on lysine 346. FAD contacts are provided by residues aspartate 355 and 361 to 364 (MLAH). Residue lysine 410 is modified to N6-acetyllysine; alternate. Lysine 410 bears the N6-succinyllysine; alternate mark. N6-acetyllysine is present on residues lysine 417 and lysine 420. The residue at position 430 (lysine 430) is an N6-succinyllysine. The active-site Proton acceptor is the histidine 487. Residue serine 502 is modified to Phosphoserine. N6-acetyllysine; alternate is present on lysine 505. Lysine 505 carries the post-translational modification N6-succinyllysine; alternate.

Belongs to the class-I pyridine nucleotide-disulfide oxidoreductase family. As to quaternary structure, homodimer. Part of the multimeric pyruvate dehydrogenase complex that contains multiple copies of pyruvate dehydrogenase (subunits PDHA (PDHA1 or PDHA2) and PDHB, E1), dihydrolipoamide acetyltransferase (DLAT, E2) and lipoamide dehydrogenase (DLD, E3). These subunits are bound to an inner core composed of about 48 DLAT and 12 PDHX molecules (by non covalent bonds). The 2-oxoglutarate dehydrogenase complex is composed of OGDH (2-oxoglutarate dehydrogenase; E1), DLST (dihydrolipoamide succinyltransferase; E2), DLD (dihydrolipoamide dehydrogenase; E3) and the assembly factor KGD4. It contains multiple copies of the three enzymatic components (E1, E2 and E3). In the nucleus, the 2-oxoglutarate dehydrogenase complex associates with KAT2A. Interacts with PDHX. FAD serves as cofactor. In terms of processing, tyrosine phosphorylated.

Its subcellular location is the mitochondrion matrix. It is found in the nucleus. The protein resides in the cell projection. It localises to the cilium. The protein localises to the flagellum. Its subcellular location is the cytoplasmic vesicle. It is found in the secretory vesicle. The protein resides in the acrosome. It catalyses the reaction N(6)-[(R)-dihydrolipoyl]-L-lysyl-[protein] + NAD(+) = N(6)-[(R)-lipoyl]-L-lysyl-[protein] + NADH + H(+). Its function is as follows. Lipoamide dehydrogenase is a component of the glycine cleavage system as well as an E3 component of three alpha-ketoacid dehydrogenase complexes (pyruvate-, alpha-ketoglutarate-, and branched-chain amino acid-dehydrogenase complex). The 2-oxoglutarate dehydrogenase complex is mainly active in the mitochondrion. A fraction of the 2-oxoglutarate dehydrogenase complex also localizes in the nucleus and is required for lysine succinylation of histones: associates with KAT2A on chromatin and provides succinyl-CoA to histone succinyltransferase KAT2A. In monomeric form may have additional moonlighting function as serine protease. Involved in the hyperactivation of spermatazoa during capacitation and in the spermatazoal acrosome reaction. This is Dihydrolipoyl dehydrogenase, mitochondrial (DLD) from Pongo abelii (Sumatran orangutan).